The following is a 389-amino-acid chain: Stilbene synthase 3 (389 aa).

Residue Lys55–Arg58 participates in substrate binding. Cys164 is a catalytic residue. Substrate-binding positions include Leu267 and Gly305 to Arg307.

It belongs to the thiolase-like superfamily. Chalcone/stilbene synthases family. As to quaternary structure, homodimer.

It is found in the cytoplasm. The enzyme catalyses 4-coumaroyl-CoA + 3 malonyl-CoA + 3 H(+) = trans-resveratrol + 4 CO2 + 4 CoA. It participates in phytoalexin biosynthesis; 3,4',5-trihydroxystilbene biosynthesis; 3,4',5-trihydroxystilbene from trans-4-coumarate: step 2/2. This chain is Stilbene synthase 3, found in Arachis hypogaea (Peanut).